The sequence spans 321 residues: uncharacterized protein (321 aa).

This is an uncharacterized protein from Galliformes (FAdV-1).